Consider the following 340-residue polypeptide: MITLQNVVKEYTSRNNKVLAVDHVDLEIEQGEIFGVVGYSGAGKSTLIRMFNGLELPSAGTVEVDNLLISQIRGSKLRKARQQIGMIFQHFNLLWSRTVAENIAFPLEIAGVRGEKRRFRVNELIRLVGLEGKENAYPAELSGGQKQRVGIARALANNPKVLLCDEATSALDPQTTDEVLELLLDINKRLNLTIIVITHEMHVIRKICNRVAVMENGKVVELGDVLDVFRHPQEKVTQRFVRQVTDSDETEELIHLLLDNYAEGKIVKLLFMSENATQPVISQVAKENDVMLNVLHGNLTQTQNGAYGTLYVQVLGTEDAINASLTQLRQLKVETEVLER.

The 240-residue stretch at 2 to 241 (ITLQNVVKEY…PQEKVTQRFV (240 aa)) folds into the ABC transporter domain. ATP is bound at residue 38–45 (GYSGAGKS).

Belongs to the ABC transporter superfamily. Methionine importer (TC 3.A.1.24) family. As to quaternary structure, the complex is composed of two ATP-binding proteins (MetN), two transmembrane proteins (MetI) and a solute-binding protein (MetQ).

It is found in the cell membrane. It carries out the reaction L-methionine(out) + ATP + H2O = L-methionine(in) + ADP + phosphate + H(+). The enzyme catalyses D-methionine(out) + ATP + H2O = D-methionine(in) + ADP + phosphate + H(+). Part of the ABC transporter complex MetNIQ involved in methionine import. Responsible for energy coupling to the transport system. In Listeria monocytogenes serovar 1/2a (strain ATCC BAA-679 / EGD-e), this protein is Methionine import ATP-binding protein MetN 2.